Reading from the N-terminus, the 215-residue chain is Large ribosomal subunit protein bL25 (215 aa).

The disordered stretch occupies residues 170–215; the sequence is DPDTSVASVTPPTTEEDLDTDDVDENAEPELVGAENDSADEESENK. 2 stretches are compositionally biased toward acidic residues: residues 183 to 197 and 206 to 215; these read TEEDLDTDDVDENAE and DSADEESENK.

Belongs to the bacterial ribosomal protein bL25 family. CTC subfamily. In terms of assembly, part of the 50S ribosomal subunit; part of the 5S rRNA/L5/L18/L25 subcomplex. Contacts the 5S rRNA. Binds to the 5S rRNA independently of L5 and L18.

In terms of biological role, this is one of the proteins that binds to the 5S RNA in the ribosome where it forms part of the central protuberance. The polypeptide is Large ribosomal subunit protein bL25 (Oceanobacillus iheyensis (strain DSM 14371 / CIP 107618 / JCM 11309 / KCTC 3954 / HTE831)).